The following is a 188-amino-acid chain: Large ribosomal subunit protein uL6 (188 aa).

This sequence belongs to the universal ribosomal protein uL6 family.

In Tetrahymena thermophila (strain SB210), this protein is Large ribosomal subunit protein uL6 (RPL9).